Here is a 783-residue protein sequence, read N- to C-terminus: MSQEKNEMFESEWSKEREREKQLASGLDTAEKALKVESEELQKSKSELICLYNEVHNLPGESESKDHFLIACDLLQRENSELETKVLKLSQEFAQLNHFTLGGKTAPSNLITSENTCKDPESNEPILETEIQSRKEETEELCPKLGERKQKEIPEESVKEGSFPREGQKEEGSQQNRDMKDEEKEQQLTMKPEEIVRLREELSHINQSLLQSQSSGDSSDDSGAQHPSSGEKLKYNQQGEVQQLHQNLHRLQILCNSAENELRYERGQNLDLKQHNSLLQEENIKIKIELKHAQQKLLDSTKMCSSLTAEYKHCQQKIKELELEVLKHTQSIKSQNNLQEKLVQEKSKVADAEEKILDLQRKLEHAHKVCLTDTCISEKQQLEEKIKEATQNEAKVKQQYQEEQQKRKLLYQNVDELHRQVRTLQDKENLLEMTCSQQQSRIQQQEALLKQLENEKRKYDEHVKSNQELSEKLSKLQQEKEALREEYLRLLKLLNVHVRNYNEKHHQQKVKLQKVKYRLTNEVELRDKRINQFEDEIGILQHKIEKEKAIQDQITAQNDTLLLEKRKLQEQVIEQEQLIHSNKWTISSIQSRVLYMDKENKQLQENSLRLTQQIGFLERIIRSIHIRRGENLKEFPVPKWWHRGKLASLPPTKKQKEIYSTEVFTSNNAELQHEDESVPEATEKWKHSEQMETTISDILESEVVNEILPLSNSSFSGKGLVESFASLQETEEIKSKEAMASSKSPEKSPENLVCSQNSEAGYINVASLKETHGIQEQDQKSEL.

Basic and acidic residues predominate over residues 1-22; that stretch reads MSQEKNEMFESEWSKEREREKQ. Disordered stretches follow at residues 1 to 26, 101 to 191, and 209 to 231; these read MSQE…LASG, LGGK…LTMK, and LLQS…SSGE. Residues 22-98 adopt a coiled-coil conformation; the sequence is QLASGLDTAE…LSQEFAQLNH (77 aa). The segment covering 106–115 has biased composition (polar residues); that stretch reads APSNLITSEN. Over residues 131-191 the composition is skewed to basic and acidic residues; it reads IQSRKEETEE…EEKEQQLTMK (61 aa). Coiled coils occupy residues 165–497 and 527–622; these read REGQ…LNVH and DKRI…RIIR. Residues 731-755 are disordered; the sequence is EEIKSKEAMASSKSPEKSPENLVCS.

The protein belongs to the prefoldin subunit beta family. Expressed in brain, kidney, pancreas, placenta, liver, thymus and prostate.

This is Coiled-coil domain-containing protein 30 (CCDC30) from Homo sapiens (Human).